We begin with the raw amino-acid sequence, 132 residues long: NADH-quinone oxidoreductase subunit A 2 (132 aa).

A run of 3 helical transmembrane segments spans residues 9–29 (AWAF…MLGL), 66–86 (LVAM…LWAV), and 93–113 (WAGF…LFYL).

This sequence belongs to the complex I subunit 3 family. NDH-1 is composed of 13 different subunits. Subunits NuoA, H, J, K, L, M, N constitute the membrane sector of the complex.

The protein resides in the cell inner membrane. The enzyme catalyses a quinone + NADH + 5 H(+)(in) = a quinol + NAD(+) + 4 H(+)(out). Its function is as follows. NDH-1 shuttles electrons from NADH, via FMN and iron-sulfur (Fe-S) centers, to quinones in the respiratory chain. The immediate electron acceptor for the enzyme in this species is believed to be ubiquinone. Couples the redox reaction to proton translocation (for every two electrons transferred, four hydrogen ions are translocated across the cytoplasmic membrane), and thus conserves the redox energy in a proton gradient. The protein is NADH-quinone oxidoreductase subunit A 2 of Pseudomonas paraeruginosa (strain DSM 24068 / PA7) (Pseudomonas aeruginosa (strain PA7)).